The primary structure comprises 411 residues: uncharacterized protein (411 aa).

This is an uncharacterized protein from Magallana gigas (Pacific oyster).